The sequence spans 330 residues: DNA-directed RNA polymerase subunit alpha (330 aa).

The segment at 1 to 236 (MQGSVTEFLK…EQLDAFVDLR (236 aa)) is alpha N-terminal domain (alpha-NTD). Positions 250–330 (FDPILLRPVD…NWPPASIAED (81 aa)) are alpha C-terminal domain (alpha-CTD).

The protein belongs to the RNA polymerase alpha chain family. In terms of assembly, homodimer. The RNAP catalytic core consists of 2 alpha, 1 beta, 1 beta' and 1 omega subunit. When a sigma factor is associated with the core the holoenzyme is formed, which can initiate transcription.

The enzyme catalyses RNA(n) + a ribonucleoside 5'-triphosphate = RNA(n+1) + diphosphate. Its function is as follows. DNA-dependent RNA polymerase catalyzes the transcription of DNA into RNA using the four ribonucleoside triphosphates as substrates. This Vibrio vulnificus (strain CMCP6) protein is DNA-directed RNA polymerase subunit alpha.